A 544-amino-acid polypeptide reads, in one-letter code: MSRETNFNGTKRKRSDVAEKVAQRWKSVRYSAEMENMAPVNSNNDSDDCVIVSESKIIDLTNQEQDLSERIETNDTAKGAVFKLMKSDFYEREDFMGEVEDMITLKDIFGTETLKRSILFSFQYELDFLLRQFHQNVENITIVGQKGTIMPIEARAMDATLAVILKKVKLIEITMPPFASHHTKLIINFYDNGECKIFLPSNNFTSMETNLPQQVCWCSPLLKIGKEGLPVPFKRSLIEYLNSYHLKDIDELITKSVEEVNFAPLSELEFVYSTPSKFQSSGLLSFYNKLEKLSAGTSASDTAKHYLCQTSSIGTSLSRARDENLWTHLMIPLFTGIMSPPAKDTAGRKKAEILPTNSLINEYSQRKIKPYIIFPTEQEFVTSPLKWSSSGWFHFQYLQKKSYYEMLRNKFKVFYKQDPAMVTRRRGTTPAHSKFYMHCATNSAGPCDASQVFKELEWCLYTSANLSQTAWGTVSRKPRNYEAGVLYHSRRLANTRKVTCRTFTRDRRGCAGNPTHVAVPFTLPVIPYDLAEDECFCLARHEND.

The active-site Nucleophile is His182. Lys184 is a substrate binding site. The tract at residues 312 to 316 is interaction with DNA; it reads SIGTS. The active-site Proton donor/acceptor is His432. Residue Lys434 coordinates substrate.

It belongs to the tyrosyl-DNA phosphodiesterase family.

The protein localises to the nucleus. DNA repair enzyme that can remove a variety of covalent adducts from DNA through hydrolysis of a 3'-phosphodiester bond, giving rise to DNA with a free 3' phosphate. Catalyzes the hydrolysis of dead-end complexes between DNA and the topoisomerase I active site tyrosine residue. Hydrolyzes 3'-phosphoglycolates on protruding 3' ends on DNA double-strand breaks due to DNA damage by radiation and free radicals. Also cleaves 5' phosphotyrosyl adducts resulting from dead-end complexes between DNA and the active site tyrosine of topoisomerase II. Contributes to DNA repair after radiation damage. Acts on blunt-ended double-strand DNA breaks and on single-stranded DNA. May have low 3'exonuclease activity and may be able to remove a single nucleoside from the 3'end of DNA and RNA molecules with 3'hydroxyl groups. Has no exonuclease activity towards DNA or RNA with a 3'phosphate. This is Tyrosyl-DNA phosphodiesterase 1 (TDP1) from Saccharomyces cerevisiae (strain ATCC 204508 / S288c) (Baker's yeast).